The sequence spans 95 residues: Small ribosomal subunit protein bS6 (95 aa).

It belongs to the bacterial ribosomal protein bS6 family.

Binds together with bS18 to 16S ribosomal RNA. This chain is Small ribosomal subunit protein bS6, found in Rhodococcus jostii (strain RHA1).